The sequence spans 332 residues: Phenol 2-monooxygenase, oxygenase component MhpL (332 aa).

It belongs to the TmoE/XamoE family.

It catalyses the reaction phenol + NADH + O2 + H(+) = catechol + NAD(+) + H2O. Its pathway is aromatic compound metabolism; phenol degradation. In terms of biological role, part of a multicomponent enzyme which catalyzes the degradation of phenol and some of its methylated derivatives. The sequence is that of Phenol 2-monooxygenase, oxygenase component MhpL (mphL) from Acinetobacter pittii (strain PHEA-2).